A 542-amino-acid polypeptide reads, in one-letter code: Esterase S (542 aa).

The signal sequence occupies residues 1 to 22; it reads MTQILLPIALLCLFAASTLSNP. Cysteine 81 and cysteine 100 are disulfide-bonded. Residue asparagine 110 is glycosylated (N-linked (GlcNAc...) asparagine). Serine 204 serves as the catalytic Acyl-ester intermediate. Cysteines 256 and 268 form a disulfide. An N-linked (GlcNAc...) asparagine glycan is attached at asparagine 396. Cysteine 507 and cysteine 528 are oxidised to a cystine.

The protein belongs to the type-B carboxylesterase/lipase family. Monomer. Specifically expressed in the ejaculatory bulbs of male.

The protein localises to the secreted. It carries out the reaction a carboxylic ester + H2O = an alcohol + a carboxylate + H(+). In terms of biological role, transferred from the ejaculatory bulbs of males to the female genitals upon copulation, plays an important role in the reproductive biology. The chain is Esterase S (EstS) from Drosophila virilis (Fruit fly).